Reading from the N-terminus, the 325-residue chain is Golgi to ER traffic protein 4 homolog A (325 aa).

Disordered regions lie at residues 1-22 (MAAA…GGVQ) and 306-325 (SGED…IELD). Acidic residues predominate over residues 307–317 (GEDDDVEDGQE).

Belongs to the GET4 family. In terms of assembly, component of the bag6/bat3 complex.

The protein resides in the cytoplasm. Its subcellular location is the cytosol. Functionally, as part of a cytosolic protein quality control complex, the bag6/bat3 complex, maintains misfolded and hydrophobic patches-containing proteins in a soluble state and participates in their proper delivery to the endoplasmic reticulum or alternatively can promote their sorting to the proteasome where they undergo degradation. The bag6/bat3 complex is involved in the post-translational delivery of tail-anchored/type II transmembrane proteins to the endoplasmic reticulum membrane. Similarly, the bag6/bat3 complex also functions as a sorting platform for proteins of the secretory pathway that are mislocalized to the cytosol either delivering them to the proteasome for degradation or to the endoplasmic reticulum. The bag6/bat3 complex also plays a role in the endoplasmic reticulum-associated degradation (ERAD), a quality control mechanism that eliminates unwanted proteins of the endoplasmic reticulum through their retrotranslocation to the cytosol and their targeting to the proteasome. It maintains these retrotranslocated proteins in an unfolded yet soluble state condition in the cytosol to ensure their proper delivery to the proteasome. This chain is Golgi to ER traffic protein 4 homolog A (get4-a), found in Xenopus laevis (African clawed frog).